Reading from the N-terminus, the 360-residue chain is MAQLSLQHIQKIYDNQVHVVKDFNLEIADKEFIVFVGPSGCGKSTTLRMIAGLEEISGGDLLIDGKRMNDVPAKARNIAMVFQNYALYPHMTVYDNMAFGLKMQKIAKEVIDERVNWAAQILGLREYLKRKPGALSGGQRQRVALGRAIVREAGVFLMDEPLSNLDAKLRVQMRAEISKLHQKLNTTMIYVTHDQTEAMTMATRIVIMKDGIVQQVGAPKTVYNQPANMFVAGFIGSPAMNFIRGTIDGDKFVTETLKLTIPEEKLAVLKTQESLHKPIVMGMRPEDIHPDAQEENNISAKISVVELTGAEFMLYTTVGGHELVVRAGALNDYHAGENITIHFDMTKCHFFDAETEIAIR.

Residues Leu-4–Ile-235 enclose the ABC transporter domain. An ATP-binding site is contributed by Gly-37–Ser-44.

It belongs to the ABC transporter superfamily.

This is an uncharacterized protein from Escherichia coli O157:H7.